Here is a 356-residue protein sequence, read N- to C-terminus: DNA polymerase IV (356 aa).

Residues 7–188 (IIHIDMDAFY…IPVTKFYGVG (182 aa)) form the UmuC domain. 2 residues coordinate Mg(2+): Asp-11 and Asp-106. Glu-107 is an active-site residue.

This sequence belongs to the DNA polymerase type-Y family. As to quaternary structure, monomer. The cofactor is Mg(2+).

The protein localises to the cytoplasm. The catalysed reaction is DNA(n) + a 2'-deoxyribonucleoside 5'-triphosphate = DNA(n+1) + diphosphate. Its function is as follows. Poorly processive, error-prone DNA polymerase involved in untargeted mutagenesis. Copies undamaged DNA at stalled replication forks, which arise in vivo from mismatched or misaligned primer ends. These misaligned primers can be extended by PolIV. Exhibits no 3'-5' exonuclease (proofreading) activity. May be involved in translesional synthesis, in conjunction with the beta clamp from PolIII. The sequence is that of DNA polymerase IV from Listeria monocytogenes serotype 4b (strain CLIP80459).